The sequence spans 183 residues: uncharacterized protein (183 aa).

The interval 136–183 (EPPASVPSKQSGRSDKKKSTRKSPTFRNRPDFRKNKGRQLNKTTKQKK) is disordered. Basic residues predominate over residues 170–183 (NKGRQLNKTTKQKK).

This is an uncharacterized protein from Homo sapiens (Human).